A 240-amino-acid polypeptide reads, in one-letter code: TATA-box-binding protein (240 aa).

The tract at residues 21–61 (NTRQVWENQNRDGTKPATTFQSEEDIKRAAPESEKDTSATS) is disordered. Positions 44 to 57 (EDIKRAAPESEKDT) are enriched in basic and acidic residues. Tandem repeats lie at residues 67-143 (LQNI…ARII) and 157-234 (IQNI…YPVL).

This sequence belongs to the TBP family. As to quaternary structure, binds DNA as monomer. The 1.2 MDa TFIID complex is composed of TATA binding protein (TBP) and the 14 TBP-associated factors. One copy of each TAF1, TAF2, TAF3, TAF7, TAF8, TAF11, TAF13, two copies of each TAF4, TAF5, TAF6, TAF9, TAF10, TAF12, and three copies of TAF14. Interacts with TFC8.

Its subcellular location is the nucleus. Its function is as follows. General transcription factor that functions at the core of the DNA-binding general transcription factor complex TFIID. Binding of TFIID to a promoter (with or without TATA element) is the initial step in preinitiation complex (PIC) formation. TFIID plays a key role in the regulation of gene expression by RNA polymerase II through different activities such as transcription activator interaction, core promoter recognition and selectivity, TFIIA and TFIIB interaction, chromatin modification (histone acetylation by TAF1), facilitation of DNA opening and initiation of transcription. The polypeptide is TATA-box-binding protein (SPT15) (Saccharomyces cerevisiae (strain ATCC 204508 / S288c) (Baker's yeast)).